Consider the following 463-residue polypeptide: Phosphoglucosamine mutase (463 aa).

Catalysis depends on Ser-108, which acts as the Phosphoserine intermediate. Residues Ser-108, Asp-247, Asp-249, and Asp-251 each contribute to the Mg(2+) site. Ser-108 is subject to Phosphoserine.

It belongs to the phosphohexose mutase family. It depends on Mg(2+) as a cofactor. In terms of processing, activated by phosphorylation.

It catalyses the reaction alpha-D-glucosamine 1-phosphate = D-glucosamine 6-phosphate. Catalyzes the conversion of glucosamine-6-phosphate to glucosamine-1-phosphate. This Nitrosospira multiformis (strain ATCC 25196 / NCIMB 11849 / C 71) protein is Phosphoglucosamine mutase.